Consider the following 543-residue polypeptide: Chaperonin GroEL 4 (543 aa).

ATP contacts are provided by residues 29–32, 86–90, glycine 411, 476–478, and aspartate 492; these read TLGP, DGTTT, and DAA.

This sequence belongs to the chaperonin (HSP60) family. As to quaternary structure, forms a cylinder of 14 subunits composed of two heptameric rings stacked back-to-back. Interacts with the co-chaperonin GroES.

It is found in the cytoplasm. The enzyme catalyses ATP + H2O + a folded polypeptide = ADP + phosphate + an unfolded polypeptide.. In terms of biological role, together with its co-chaperonin GroES, plays an essential role in assisting protein folding. The GroEL-GroES system forms a nano-cage that allows encapsulation of the non-native substrate proteins and provides a physical environment optimized to promote and accelerate protein folding. The protein is Chaperonin GroEL 4 of Bradyrhizobium diazoefficiens (strain JCM 10833 / BCRC 13528 / IAM 13628 / NBRC 14792 / USDA 110).